A 138-amino-acid chain; its full sequence is ATP synthase epsilon chain, chloroplastic (138 aa).

It belongs to the ATPase epsilon chain family. As to quaternary structure, F-type ATPases have 2 components, CF(1) - the catalytic core - and CF(0) - the membrane proton channel. CF(1) has five subunits: alpha(3), beta(3), gamma(1), delta(1), epsilon(1). CF(0) has three main subunits: a, b and c.

The protein localises to the plastid. It localises to the chloroplast thylakoid membrane. Functionally, produces ATP from ADP in the presence of a proton gradient across the membrane. The protein is ATP synthase epsilon chain, chloroplastic of Huperzia lucidula (Shining clubmoss).